The chain runs to 62 residues: uncharacterized protein (62 aa).

Residues Tyr-17 to Asn-62 form a disordered region.

This is an uncharacterized protein from Dictyostelium discoideum (Social amoeba).